The following is a 78-amino-acid chain: Large ribosomal subunit protein bL31 (78 aa).

Cys-16, Cys-18, Cys-38, and Cys-41 together coordinate Zn(2+).

The protein belongs to the bacterial ribosomal protein bL31 family. Type A subfamily. As to quaternary structure, part of the 50S ribosomal subunit. The cofactor is Zn(2+).

Its function is as follows. Binds the 23S rRNA. The polypeptide is Large ribosomal subunit protein bL31 (Parafrankia sp. (strain EAN1pec)).